We begin with the raw amino-acid sequence, 379 residues long: Queuine tRNA-ribosyltransferase (379 aa).

The active-site Proton acceptor is the aspartate 94. Substrate contacts are provided by residues 94-98 (DSGGF), aspartate 148, glutamine 191, and glycine 218. An RNA binding region spans residues 249-255 (GVGSPDA). The active-site Nucleophile is the aspartate 268. The RNA binding; important for wobble base 34 recognition stretch occupies residues 273 to 277 (TRIAR). Positions 306, 308, 311, and 337 each coordinate Zn(2+).

It belongs to the queuine tRNA-ribosyltransferase family. As to quaternary structure, homodimer. Within each dimer, one monomer is responsible for RNA recognition and catalysis, while the other monomer binds to the replacement base PreQ1. It depends on Zn(2+) as a cofactor.

It carries out the reaction 7-aminomethyl-7-carbaguanine + guanosine(34) in tRNA = 7-aminomethyl-7-carbaguanosine(34) in tRNA + guanine. It functions in the pathway tRNA modification; tRNA-queuosine biosynthesis. Its function is as follows. Catalyzes the base-exchange of a guanine (G) residue with the queuine precursor 7-aminomethyl-7-deazaguanine (PreQ1) at position 34 (anticodon wobble position) in tRNAs with GU(N) anticodons (tRNA-Asp, -Asn, -His and -Tyr). Catalysis occurs through a double-displacement mechanism. The nucleophile active site attacks the C1' of nucleotide 34 to detach the guanine base from the RNA, forming a covalent enzyme-RNA intermediate. The proton acceptor active site deprotonates the incoming PreQ1, allowing a nucleophilic attack on the C1' of the ribose to form the product. After dissociation, two additional enzymatic reactions on the tRNA convert PreQ1 to queuine (Q), resulting in the hypermodified nucleoside queuosine (7-(((4,5-cis-dihydroxy-2-cyclopenten-1-yl)amino)methyl)-7-deazaguanosine). The sequence is that of Queuine tRNA-ribosyltransferase from Staphylococcus haemolyticus (strain JCSC1435).